The sequence spans 128 residues: uncharacterized protein (128 aa).

As to expression, high expression in pituitary gland and weak in pancreas.

This is an uncharacterized protein from Homo sapiens (Human).